Here is a 1790-residue protein sequence, read N- to C-terminus: Protein FAM186A (1790 aa).

The protein belongs to the FAM186 family.

This chain is Protein FAM186A (FAM186A), found in Mus musculus (Mouse).